We begin with the raw amino-acid sequence, 555 residues long: Disabled homolog 1 (555 aa).

The interval 1 to 26 is disordered; that stretch reads MSTETELQVAVKTSAKKDSRKKGQDR. Residues 15–26 are compositionally biased toward basic and acidic residues; it reads AKKDSRKKGQDR. The 154-residue stretch at 36-189 folds into the PID domain; it reads KGEGVRYKAK…CEQAVYQTIL (154 aa). Residues Tyr198, Tyr220, and Tyr232 each carry the phosphotyrosine modification. Disordered stretches follow at residues 386–409 and 469–555; these read PLAT…PRQK and LTPV…QDGS. Polar residues predominate over residues 391–403; that stretch reads PGTNDSARSSPQS. 2 stretches are compositionally biased toward low complexity: residues 470-479 and 490-501; these read TPVTSTTPST and SSPSKSSASHVS. Ser491 carries the post-translational modification Phosphoserine; by CDK5. The span at 504–513 shows a compositional bias: acidic residues; the sequence is TADDIFEEGF.

Associates with the SH2 domains of SRC, FYN and ABL. Interacts (phosphorylated on tyrosine residues) with CRK and CRKL (via respective SH2 domain). Interacts with SIAH1, LRP8 and VLDLR. Interacts with LRP1. Interacts with APLP1 (via NPXY motif). Interacts with DAB2IP. Interacts with ZSWIM8. Post-translationally, phosphorylated by FYN on Tyr-198 and Tyr-220 upon reelin induction in embryonic neurons. Also phosphorylated on Ser-491 independently of reelin signaling. In terms of processing, ubiquitinated by various cullin-5-RING E3 ubiquitin-protein ligase complexes (ECS complexes) following ligand-binding and phosphorylation, leading to its degradation. Ubiquitinated by the ECS(SOCS7) complex in the cortical plate of the developing cerebral cortex following ligand-binding and phosphorylation by FYN, leading to its degradation by the proteasome. Recognized by ZSWIM8 through a disorder targets misorder mechanism that eliminates misfolded DAB1 via ubiquitination and proteasomal degradation.

It is found in the cytoplasm. Its function is as follows. Signaling adapter of the reelin-mediated signaling pathway, which regulates the migration and differentiation of postmitotic neurons during brain development. Mediates intracellular transduction of Reelin signaling following reelin (RELN)-binding to its receptor: acts by docking proteins through its phosphotyrosine residues and PID domain. This is Disabled homolog 1 (Dab1) from Rattus norvegicus (Rat).